The following is a 130-amino-acid chain: uncharacterized protein (130 aa).

The disordered stretch occupies residues M1–R62. Residues P21–S30 are compositionally biased toward pro residues.

This is an uncharacterized protein from Homo sapiens (Human).